A 277-amino-acid polypeptide reads, in one-letter code: tRNA (guanine-N(7)-)-methyltransferase (277 aa).

Residues methionine 1–arginine 37 are disordered. Serine 28 is modified (phosphoserine). Residues glycine 85, glutamate 108, arginine 110, asparagine 141, alanine 142, and leucine 161 each contribute to the S-adenosyl-L-methionine site. The active site involves aspartate 164. The tract at residues proline 165–lysine 173 is alphaC helix. Threonine 239 and glutamate 241 together coordinate S-adenosyl-L-methionine. The tract at residues threonine 239–arginine 247 is alpha6 helix.

The protein belongs to the class I-like SAM-binding methyltransferase superfamily. TrmB family. Catalytic component of the METTL1-WDR4 complex, composed of METTL1 and WDR4. In terms of processing, phosphorylation at Ser-28 by PKB/AKT1 inactivates its methyltransferase activity via a steric interference mechanism in the active site that locally disrupts the catalytic center. Phosphorylation at Ser-28 does not affect the interaction with WDR4.

The protein resides in the nucleus. It carries out the reaction guanosine(46) in tRNA + S-adenosyl-L-methionine = N(7)-methylguanosine(46) in tRNA + S-adenosyl-L-homocysteine. The enzyme catalyses a guanosine in mRNA + S-adenosyl-L-methionine = an N(7)-methylguanosine in mRNA + S-adenosyl-L-homocysteine. The catalysed reaction is a guanosine in miRNA + S-adenosyl-L-methionine = an N(7)-methylguanosine in miRNA + S-adenosyl-L-homocysteine. It participates in tRNA modification; N(7)-methylguanine-tRNA biosynthesis. Functionally, catalytic component of METTL1-WDR4 methyltransferase complex that mediates the formation of N(7)-methylguanine in a subset of RNA species, such as tRNAs, mRNAs and microRNAs (miRNAs). Catalyzes the formation of N(7)-methylguanine at position 46 (m7G46) in a large subset of tRNAs that contain the 5'-RAGGU-3' motif within the variable loop. M7G46 interacts with C13-G22 in the D-loop to stabilize tRNA tertiary structure and protect tRNAs from decay. Also acts as a methyltransferase for a subset of internal N(7)-methylguanine in mRNAs. Internal N(7)-methylguanine methylation of mRNAs in response to stress promotes their relocalization to stress granules, thereby suppressing their translation. Also methylates a specific subset of miRNAs, such as let-7. N(7)-methylguanine methylation of let-7 miRNA promotes let-7 miRNA processing by disrupting an inhibitory secondary structure within the primary miRNA transcript (pri-miRNA). Acts as a regulator of embryonic stem cell self-renewal and differentiation. The protein is tRNA (guanine-N(7)-)-methyltransferase of Bos taurus (Bovine).